The primary structure comprises 370 residues: DNA replication and repair protein RecF (370 aa).

33–40 (GPNAAGKT) contacts ATP.

This sequence belongs to the RecF family.

The protein resides in the cytoplasm. In terms of biological role, the RecF protein is involved in DNA metabolism; it is required for DNA replication and normal SOS inducibility. RecF binds preferentially to single-stranded, linear DNA. It also seems to bind ATP. The polypeptide is DNA replication and repair protein RecF (Moorella thermoacetica (strain ATCC 39073 / JCM 9320)).